A 158-amino-acid polypeptide reads, in one-letter code: Endoribonuclease YbeY (158 aa).

3 residues coordinate Zn(2+): His-117, His-121, and His-127.

It belongs to the endoribonuclease YbeY family. Zn(2+) serves as cofactor.

Its subcellular location is the cytoplasm. Single strand-specific metallo-endoribonuclease involved in late-stage 70S ribosome quality control and in maturation of the 3' terminus of the 16S rRNA. In Psychromonas ingrahamii (strain DSM 17664 / CCUG 51855 / 37), this protein is Endoribonuclease YbeY.